The chain runs to 69 residues: Large ribosomal subunit protein bL31 (69 aa).

Zn(2+)-binding residues include cysteine 17, cysteine 19, cysteine 37, and cysteine 40.

This sequence belongs to the bacterial ribosomal protein bL31 family. Type A subfamily. Part of the 50S ribosomal subunit. Zn(2+) is required as a cofactor.

Binds the 23S rRNA. The polypeptide is Large ribosomal subunit protein bL31 (Thermoanaerobacter pseudethanolicus (strain ATCC 33223 / 39E) (Clostridium thermohydrosulfuricum)).